The following is an 81-amino-acid chain: Photosystem I iron-sulfur center (81 aa).

4Fe-4S ferredoxin-type domains are found at residues 2–31 (SHSV…MVPW) and 39–68 (IASA…VRVY). The [4Fe-4S] cluster site is built by C11, C14, C17, C21, C48, C51, C54, and C58.

In terms of assembly, the eukaryotic PSI reaction center is composed of at least 11 subunits. Requires [4Fe-4S] cluster as cofactor.

The protein localises to the plastid. It localises to the chloroplast thylakoid membrane. It carries out the reaction reduced [plastocyanin] + hnu + oxidized [2Fe-2S]-[ferredoxin] = oxidized [plastocyanin] + reduced [2Fe-2S]-[ferredoxin]. Apoprotein for the two 4Fe-4S centers FA and FB of photosystem I (PSI); essential for photochemical activity. FB is the terminal electron acceptor of PSI, donating electrons to ferredoxin. The C-terminus interacts with PsaA/B/D and helps assemble the protein into the PSI complex. Required for binding of PsaD and PsaE to PSI. PSI is a plastocyanin/cytochrome c6-ferredoxin oxidoreductase, converting photonic excitation into a charge separation, which transfers an electron from the donor P700 chlorophyll pair to the spectroscopically characterized acceptors A0, A1, FX, FA and FB in turn. In Nephroselmis olivacea (Green alga), this protein is Photosystem I iron-sulfur center.